Consider the following 277-residue polypeptide: Orotidine 5'-phosphate decarboxylase (277 aa).

Lys93 (proton donor) is an active-site residue.

This sequence belongs to the OMP decarboxylase family. Type 2 subfamily.

It catalyses the reaction orotidine 5'-phosphate + H(+) = UMP + CO2. It functions in the pathway pyrimidine metabolism; UMP biosynthesis via de novo pathway; UMP from orotate: step 2/2. The polypeptide is Orotidine 5'-phosphate decarboxylase (Haloarcula marismortui (strain ATCC 43049 / DSM 3752 / JCM 8966 / VKM B-1809) (Halobacterium marismortui)).